A 50-amino-acid polypeptide reads, in one-letter code: FLGTINLSLCEQERDADEEERRDEPNESNVEVEKRFLSGIVGMLGKLFGK.

The N-terminal stretch at 1–10 is a signal peptide; sequence FLGTINLSLC. Residues 11–35 constitute a propeptide that is removed on maturation; it reads EQERDADEEERRDEPNESNVEVEKR. F48 bears the Phenylalanine amide mark.

The protein belongs to the frog skin active peptide (FSAP) family. Temporin subfamily. In terms of tissue distribution, expressed by the skin glands.

The protein localises to the secreted. The protein resides in the target cell membrane. Its function is as follows. Amphipathic alpha-helical antimicrobial peptide with highly potent activity against Gram-positive bacteria, and potent activity Gram-negative bacteria and fungi (MIC=2-30 uM). Acts through membranolytic mechanism involving rapid membrane permeabilization and depolarization. Shows a direct extra-cellular antiviral activity probably through degradation of the viral envelope. Also shows a weak indirect antiviral activity by inhibiting virus replication. Also displays anti-trypanosoma and anti-leishmania (prosmastigotes and axenic amastigotes) activity through membranolytic mechanism. Also induces apoptosis in leishmania promastigotes at high peptide concentrations. Shows moderate hemolytic activity (LC(50)=25 uM). In contrast to many antibiotics, this peptide does not induce bacterial resistance. This Pelophylax saharicus (Sahara frog) protein is Temporin-SHa.